A 153-amino-acid polypeptide reads, in one-letter code: Small ribosomal subunit protein uS5 (153 aa).

Residues 15-78 (FQEVVVNVGR…DDAFKNLIHV (64 aa)) form the S5 DRBM domain.

It belongs to the universal ribosomal protein uS5 family. Part of the 30S ribosomal subunit. Contacts proteins S4 and S8.

In terms of biological role, with S4 and S12 plays an important role in translational accuracy. Functionally, located at the back of the 30S subunit body where it stabilizes the conformation of the head with respect to the body. This chain is Small ribosomal subunit protein uS5, found in Helicobacter acinonychis (strain Sheeba).